The primary structure comprises 263 residues: Ribonuclease HII (263 aa).

The RNase H type-2 domain occupies 74-262 (EHVAGLDEVG…VQETAATRQT (189 aa)). A divalent metal cation contacts are provided by D80, E81, and D172.

Belongs to the RNase HII family. Mn(2+) serves as cofactor. Requires Mg(2+) as cofactor.

The protein localises to the cytoplasm. The enzyme catalyses Endonucleolytic cleavage to 5'-phosphomonoester.. Its function is as follows. Endonuclease that specifically degrades the RNA of RNA-DNA hybrids. The protein is Ribonuclease HII (rnhB) of Halalkalibacterium halodurans (strain ATCC BAA-125 / DSM 18197 / FERM 7344 / JCM 9153 / C-125) (Bacillus halodurans).